We begin with the raw amino-acid sequence, 104 residues long: Guanidinium exporter (104 aa).

At 1 to 3 (MSW) the chain is on the cytoplasmic side. The chain crosses the membrane as a helical span at residues 4–26 (IILFVAGLLEIVWAVGLKYTHGF). Residues 27–32 (TRLTPS) are Periplasmic-facing. A helical transmembrane segment spans residues 33-50 (IITISAMIVSMGMLSYAM). The Cytoplasmic portion of the chain corresponds to 51–54 (KGLP). The chain crosses the membrane as a helical span at residues 55–77 (AGTAYAIWTGIGAVGTAIFGIIV). Residues 78-83 (FGESAN) lie on the Periplasmic side of the membrane. The chain crosses the membrane as a helical span at residues 84 to 103 (IYRLLSLAMIVFGIIGLKLA). A topological domain (cytoplasmic) is located at residue Ser-104.

This sequence belongs to the drug/metabolite transporter (DMT) superfamily. Small multidrug resistance (SMR) (TC 2.A.7.1) family. Gdx/SugE subfamily.

It localises to the cell inner membrane. In terms of biological role, guanidinium ion exporter. Couples guanidinium export to the proton motive force, exchanging one guanidinium ion for two protons. The chain is Guanidinium exporter from Proteus vulgaris.